The sequence spans 305 residues: Serine/threonine-protein phosphatase PP2A catalytic subunit (305 aa).

Positions 53, 55, 81, and 113 each coordinate Mn(2+). Residue His114 is the Proton donor of the active site. His163 and His237 together coordinate Mn(2+).

Belongs to the PPP phosphatase family. PP-2A subfamily. Mn(2+) is required as a cofactor.

The catalysed reaction is O-phospho-L-seryl-[protein] + H2O = L-seryl-[protein] + phosphate. The enzyme catalyses O-phospho-L-threonyl-[protein] + H2O = L-threonyl-[protein] + phosphate. The chain is Serine/threonine-protein phosphatase PP2A catalytic subunit from Helianthus annuus (Common sunflower).